Reading from the N-terminus, the 666-residue chain is ATP synthase subunit alpha 2 (666 aa).

182 to 189 (GDRATGKT) lines the ATP pocket. Residues 527 to 666 (MPAEDAAGDI…DAEAEARHKR (140 aa)) form a disordered region. The span at 545-590 (ARGDADRDADHGANREVSREVSPEASREVSREVSCEVSHEADRDAA) shows a compositional bias: basic and acidic residues. Residues 591–601 (ADAARVAGRAP) show a composition bias toward low complexity. The span at 623-641 (ADGDRASASRPRPDARGDA) shows a compositional bias: basic and acidic residues.

It belongs to the ATPase alpha/beta chains family. In terms of assembly, F-type ATPases have 2 components, CF(1) - the catalytic core - and CF(0) - the membrane proton channel. CF(1) has five subunits: alpha(3), beta(3), gamma(1), delta(1), epsilon(1). CF(0) has three main subunits: a(1), b(2) and c(9-12). The alpha and beta chains form an alternating ring which encloses part of the gamma chain. CF(1) is attached to CF(0) by a central stalk formed by the gamma and epsilon chains, while a peripheral stalk is formed by the delta and b chains.

The protein localises to the cell inner membrane. It carries out the reaction ATP + H2O + 4 H(+)(in) = ADP + phosphate + 5 H(+)(out). Its function is as follows. Produces ATP from ADP in the presence of a proton gradient across the membrane. The alpha chain is a regulatory subunit. The polypeptide is ATP synthase subunit alpha 2 (Burkholderia pseudomallei (strain 1106a)).